Consider the following 320-residue polypeptide: Cytochrome f (320 aa).

A signal peptide spans 1-35 (MHTKNLFYSRTQQITQYLSALLMMVILTRTSISSA). Heme is bound by residues tyrosine 36, cysteine 56, cysteine 59, and histidine 60. A helical transmembrane segment spans residues 286–306 (VQVLLFFFASIILAQIFLVLK).

Belongs to the cytochrome f family. In terms of assembly, the 4 large subunits of the cytochrome b6-f complex are cytochrome b6, subunit IV (17 kDa polypeptide, petD), cytochrome f and the Rieske protein, while the 4 small subunits are PetG, PetL, PetM and PetN. The complex functions as a dimer. Heme is required as a cofactor.

It is found in the plastid thylakoid membrane. Its function is as follows. Component of the cytochrome b6-f complex, which mediates electron transfer between photosystem II (PSII) and photosystem I (PSI), cyclic electron flow around PSI, and state transitions. This is Cytochrome f from Cuscuta gronovii (Common dodder).